We begin with the raw amino-acid sequence, 228 residues long: Ferric nitrobindin-like protein (228 aa).

The disordered stretch occupies residues 1–21 (MTSDEVRDGAGSPADSSKGNK). A GXWXGXG motif is present at residues 75–81 (GVWRGEG).

This sequence belongs to the nitrobindin family.

The chain is Ferric nitrobindin-like protein from Mycobacterium leprae (strain TN).